Here is a 188-residue protein sequence, read N- to C-terminus: Diphosphoinositol polyphosphate phosphohydrolase DDP1 (188 aa).

Positions 1 to 21 are enriched in basic and acidic residues; the sequence is MGKTADNHGPVRSETAREGRE. The interval 1–23 is disordered; that stretch reads MGKTADNHGPVRSETAREGRENQ. The region spanning 30 to 179 is the Nudix hydrolase domain; that stretch reads GARLVAGCIC…KRPELLEALN (150 aa). 1D-myo-inositol hexakisphosphate is bound by residues Arg-32, Ser-52, Ser-53, and Lys-63. 5-diphospho-1D-myo-inositol 1,2,3,4,6-pentakisphosphate-binding residues include Arg-32, Ser-52, Ser-53, and Lys-63. Residues Arg-32, Ser-52, Ser-53, and Lys-63 each contribute to the P(1),P(5)-bis(5'-adenosyl) pentaphosphate site. Positions 63, 80, and 84 each coordinate Mg(2+). The Nudix box signature appears at 65-86; it reads GVEKDEPNYETTAQRETWEEAG. Asp-100 lines the P(1),P(5)-bis(5'-adenosyl) pentaphosphate pocket. The 1D-myo-inositol hexakisphosphate site is built by Arg-102, Arg-129, Arg-152, and Arg-171. Arg-102 serves as a coordination point for 5-diphospho-1D-myo-inositol 1,2,3,4,6-pentakisphosphate. The 5-diphospho-1D-myo-inositol 1,2,3,4,6-pentakisphosphate site is built by Arg-152 and Arg-171. P(1),P(5)-bis(5'-adenosyl) pentaphosphate is bound by residues Arg-152, Arg-171, and Glu-173.

It belongs to the Nudix hydrolase family. DIPP subfamily. Requires Mg(2+) as cofactor. Mn(2+) serves as cofactor. The cofactor is Zn(2+).

It localises to the cytoplasm. It is found in the nucleus. The catalysed reaction is diphospho-myo-inositol polyphosphate + H2O = myo-inositol polyphosphate + phosphate.. It catalyses the reaction P(1),P(6)-bis(5'-adenosyl) hexaphosphate + H2O = adenosine 5'-pentaphosphate + AMP + 2 H(+). The enzyme catalyses P(1),P(5)-bis(5'-adenosyl) pentaphosphate + H2O = adenosine 5'-tetraphosphate + AMP + 2 H(+). It carries out the reaction [phosphate](n+1) + n H2O = (n+1) phosphate + n H(+). May eliminate potentially toxic dinucleoside polyphosphates during sporulation. Most active against diadenosine 5',5'''-P1,P6-hexaphosphate (Ap6A). Can also hydrolyze diadenosine 5',5'''-P1,P5-pentaphosphate (Ap5A), adenosine 5'-pentaphosphate (p5A), and adenosine 5'-tetraphosphate (p4A) are also substrates, but not diadenosine 5',5'''-P1,P4-tetraphosphate (Ap4A) or other dinucleotides, mononucleotides, nucleotide sugars, or nucleotide alcohols. Also cleaves a beta-phosphate from the diphosphate groups in PP-InsP5 (diphosphoinositol pentakisphosphate) and [PP]2-InsP4 (bisdiphosphoinositol tetrakisphosphate). Also has endopolyphosphatase activity. The protein is Diphosphoinositol polyphosphate phosphohydrolase DDP1 (DDP1) of Saccharomyces cerevisiae (strain ATCC 204508 / S288c) (Baker's yeast).